Consider the following 571-residue polypeptide: RNA polymerase sigma factor SigA (571 aa).

The segment at methionine 321–threonine 391 is sigma-70 factor domain-2. Positions aspartate 345–glutamine 348 match the Interaction with polymerase core subunit RpoC motif. Positions glutamate 400 to alanine 476 are sigma-70 factor domain-3. The interval valine 489 to histidine 542 is sigma-70 factor domain-4. A DNA-binding region (H-T-H motif) is located at residues leucine 515–alanine 534.

Belongs to the sigma-70 factor family. RpoD/SigA subfamily. As to quaternary structure, interacts transiently with the RNA polymerase catalytic core.

It localises to the cytoplasm. Sigma factors are initiation factors that promote the attachment of RNA polymerase to specific initiation sites and are then released. This sigma factor is the primary sigma factor during exponential growth. This is RNA polymerase sigma factor SigA from Chlamydia muridarum (strain MoPn / Nigg).